The sequence spans 782 residues: uncharacterized protein (782 aa).

2 disordered regions span residues 1–25 and 175–195; these read MFSP…STTS and RPRT…EDLR. A compositionally biased stretch (low complexity) spans 13-25; that stretch reads ESESVSNCESTTS. Basic and acidic residues predominate over residues 183 to 195; sequence RAGDASMSREDLR. Coiled-coil stretches lie at residues 223–331, 348–398, 428–601, and 699–743; these read RENR…STLN, LSQF…VSTL, NRIN…QLLN, and TIET…IIAK. The tract at residues 748–782 is disordered; sequence NIPKTEKSSPMKKVPPIENFRAKSQTSITGLSPVL. Over residues 769–782 the composition is skewed to polar residues; it reads AKSQTSITGLSPVL.

This is an uncharacterized protein from Caenorhabditis elegans.